Consider the following 494-residue polypeptide: GDP-fucose protein O-fucosyltransferase 4 (494 aa).

The Cytoplasmic segment spans residues 1–7 (MAARYTE). The helical; Signal-anchor for type II membrane protein transmembrane segment at 8–24 (AVLAALGVLSVCSASSS) threads the bilayer. The Lumenal portion of the chain corresponds to 25-494 (SGSGASGKAG…EIFMKRNKNL (470 aa)). An N-linked (GlcNAc...) asparagine glycan is attached at N167. A disulfide bridge connects residues C390 and C393.

Belongs to the glycosyltransferase 10 family.

Its subcellular location is the endoplasmic reticulum membrane. It carries out the reaction L-threonyl-[protein] + GDP-beta-L-fucose = 3-O-(alpha-L-fucosyl)-L-threonyl-[protein] + GDP + H(+). The enzyme catalyses L-seryl-[protein] + GDP-beta-L-fucose = 3-O-(alpha-L-fucosyl)-L-seryl-[protein] + GDP + H(+). It functions in the pathway protein modification; protein glycosylation. Protein O-fucosyltransferase that specifically catalyzes O-fucosylation of serine or threonine residues in EMI domains of target proteins, such as MMRN1, MMRN2 and EMID1. Attaches fucose through an O-glycosidic linkage. O-fucosylation of EMI domain-containing proteins may be required for facilitating protein folding and secretion. Also shows minor alpha-(1,3)-fucosyltransferase activity toward activity toward biantennary N-glycan acceptors. However, this was tested with a library of synthetic substrates and this activity is unsure in vivo. The chain is GDP-fucose protein O-fucosyltransferase 4 (Fut11) from Rattus norvegicus (Rat).